The sequence spans 215 residues: Probable glutathione S-transferase GSTF2 (215 aa).

One can recognise a GST N-terminal domain in the interval 2-83 (APMKLYGSTL…YVCRKNKPEL (82 aa)). Glutathione is bound by residues serine 12, 41–42 (HK), 54–55 (QV), and 67–68 (ES). Residues 88–215 (DLKESAMVDV…KVASLMKPPA (128 aa)) enclose the GST C-terminal domain.

The protein belongs to the GST superfamily. Phi family. As to expression, constitutively expressed in roots. Expressed in anthers, callus, panicles, sheaths and stems (at protein level).

The enzyme catalyses RX + glutathione = an S-substituted glutathione + a halide anion + H(+). In terms of biological role, conjugation of reduced glutathione to a wide number of exogenous and endogenous hydrophobic electrophiles. In Oryza sativa subsp. japonica (Rice), this protein is Probable glutathione S-transferase GSTF2 (GSTF2).